Consider the following 186-residue polypeptide: Ribosome maturation factor RimM (186 aa).

Positions 93–168 (EDDFYLVDLI…VLIDPPQEEN (76 aa)) constitute a PRC barrel domain. The disordered stretch occupies residues 163-186 (PPQEENAPEFGRNELGHDDGGEAA). Over residues 173-186 (GRNELGHDDGGEAA) the composition is skewed to basic and acidic residues.

This sequence belongs to the RimM family. As to quaternary structure, binds ribosomal protein uS19.

It localises to the cytoplasm. Its function is as follows. An accessory protein needed during the final step in the assembly of 30S ribosomal subunit, possibly for assembly of the head region. Essential for efficient processing of 16S rRNA. May be needed both before and after RbfA during the maturation of 16S rRNA. It has affinity for free ribosomal 30S subunits but not for 70S ribosomes. The protein is Ribosome maturation factor RimM of Granulibacter bethesdensis (strain ATCC BAA-1260 / CGDNIH1).